Consider the following 271-residue polypeptide: Acetyl-coenzyme A carboxylase carboxyl transferase subunit beta (271 aa).

The region spanning 21–271 (LWIQCPYCKQ…LGDLLALHTA (251 aa)) is the CoA carboxyltransferase N-terminal domain. Residues Cys25, Cys28, Cys43, and Cys46 each contribute to the Zn(2+) site. A C4-type zinc finger spans residues 25–46 (CPYCKQGSYRESLGNAQVCPHC).

It belongs to the AccD/PCCB family. In terms of assembly, acetyl-CoA carboxylase is a heterohexamer composed of biotin carboxyl carrier protein (AccB), biotin carboxylase (AccC) and two subunits each of ACCase subunit alpha (AccA) and ACCase subunit beta (AccD). The cofactor is Zn(2+).

It is found in the cytoplasm. It carries out the reaction N(6)-carboxybiotinyl-L-lysyl-[protein] + acetyl-CoA = N(6)-biotinyl-L-lysyl-[protein] + malonyl-CoA. It participates in lipid metabolism; malonyl-CoA biosynthesis; malonyl-CoA from acetyl-CoA: step 1/1. Its function is as follows. Component of the acetyl coenzyme A carboxylase (ACC) complex. Biotin carboxylase (BC) catalyzes the carboxylation of biotin on its carrier protein (BCCP) and then the CO(2) group is transferred by the transcarboxylase to acetyl-CoA to form malonyl-CoA. The chain is Acetyl-coenzyme A carboxylase carboxyl transferase subunit beta from Lacticaseibacillus casei (strain BL23) (Lactobacillus casei).